A 174-amino-acid polypeptide reads, in one-letter code: Cell division protein FtsL (174 aa).

At 1–38 (MLAAPRELSYIPQPVVSSKQSPRSGLSNRRRESRARQK) the chain is on the cytoplasmic side. The chain crosses the membrane as a helical span at residues 39-59 (ILLLGLVLMGFVIGLSLTFLT). At 60–174 (MQVLIKGYKI…EPARQAGAGV (115 aa)) the chain is on the extracellular side.

Belongs to the FtsL family.

It is found in the cell membrane. Functionally, essential cell division protein. In Moorella thermoacetica (strain ATCC 39073 / JCM 9320), this protein is Cell division protein FtsL.